An 81-amino-acid polypeptide reads, in one-letter code: Conotoxin Lt6.4 (81 aa).

The first 19 residues, 1-19 (MKLVLAIVLILMFLSLSAG), serve as a signal peptide directing secretion. The propeptide occupies 20-42 (AETSDNGVSRGGHRPQYWPVTPP). 3 cysteine pairs are disulfide-bonded: cysteine 46-cysteine 60, cysteine 53-cysteine 65, and cysteine 59-cysteine 80.

It belongs to the conotoxin I3 superfamily. As to expression, expressed by the venom duct.

It is found in the secreted. The sequence is that of Conotoxin Lt6.4 from Conus litteratus (Lettered cone).